A 1975-amino-acid chain; its full sequence is Cadherin-87A (1975 aa).

An N-terminal signal peptide occupies residues 1 to 17 (MKLPLGLLMICLGLTLA). The Extracellular portion of the chain corresponds to 18–1775 (KGETNLPPVF…AIVQDEFDLA (1758 aa)). Cadherin domains follow at residues 28-132 (TQTL…PPEF), 133-245 (QNTP…PPVF), 246-358 (QGSL…PPVF), 359-472 (NHKE…KPVF), 473-669 (EQES…PPVC), 670-774 (ESPL…VPNF), 775-878 (EQQS…DPYF), 879-998 (VPAT…PPRF), 999-1103 (NAPW…DPKF), 1104-1211 (SQSD…APVF), 1212-1318 (TRDV…KPEF), 1319-1431 (VIPA…RPEF), 1432-1553 (PDAS…PPVF), and 1554-1677 (EKPI…PPEE). Residues N39, N77, and N203 are each glycosylated (N-linked (GlcNAc...) asparagine). N424 is a glycosylation site (N-linked (GlcNAc...) asparagine). Positions 535 to 560 (CHDNGESNRRERRDLNEDEHVEEDDG) are disordered. A compositionally biased stretch (basic and acidic residues) spans 537 to 549 (DNGESNRRERRDL). The segment covering 550 to 560 (NEDEHVEEDDG) has biased composition (acidic residues). N730 and N761 each carry an N-linked (GlcNAc...) asparagine glycan. Residues N1039, N1049, N1111, N1163, N1217, N1325, N1349, N1492, N1576, and N1691 are each glycosylated (N-linked (GlcNAc...) asparagine). The helical transmembrane segment at 1776-1796 (VAGLVALVIVLFVGVISFIVL) threads the bilayer. Residues 1797–1975 (CCCLKHWNLS…DGDDAVAELI (179 aa)) lie on the Cytoplasmic side of the membrane. Positions 1887–1899 (YATIQPRNNQNRL) are enriched in polar residues. Residues 1887–1916 (YATIQPRNNQNRLTGGGGAGGGSMRSGGGA) are disordered. Positions 1900–1916 (TGGGGAGGGSMRSGGGA) are enriched in gly residues.

The protein localises to the cell membrane. Its function is as follows. Cadherins are calcium-dependent cell adhesion proteins. They preferentially interact with themselves in a homophilic manner in connecting cells. This is Cadherin-87A (Cad87A) from Drosophila melanogaster (Fruit fly).